The primary structure comprises 76 residues: DNA-directed RNA polymerase subunit Rpo10 (76 aa).

Zn(2+) is bound by residues Cys-16, Cys-19, Cys-53, and Cys-54.

This sequence belongs to the archaeal Rpo10/eukaryotic RPB10 RNA polymerase subunit family. Part of the RNA polymerase complex. Zn(2+) is required as a cofactor.

The protein resides in the cytoplasm. The enzyme catalyses RNA(n) + a ribonucleoside 5'-triphosphate = RNA(n+1) + diphosphate. In terms of biological role, DNA-dependent RNA polymerase (RNAP) catalyzes the transcription of DNA into RNA using the four ribonucleoside triphosphates as substrates. This Archaeoglobus fulgidus (strain ATCC 49558 / DSM 4304 / JCM 9628 / NBRC 100126 / VC-16) protein is DNA-directed RNA polymerase subunit Rpo10.